Consider the following 427-residue polypeptide: MGSVRTNRYSIVSSEEDGMKLATMAVANGFGNGKSKVHTRQQCRSRFVKKDGHCNVQFINVGEKGQRYLADIFTTCVDIRWRWMLVIFCLAFVLSWLFFGCVFWLIALLHGDLDASKESKACVSEVNSFTAAFLFSIETQTTIGYGFRCVTDECPVAVFMVVFQSIVGCIIDAFIIGAVMAKMAKPKKRNETLVFSHNAVIAMRDGKLCLMWRVGNLRKSHLVEAHVRAQLLKSRITSEGEYIPLDQIDINVGFDSGIDRIFLVSPITIVHEIDEDSPLYDLSKQDIDNADFEIVVILEGMVEATAMTTQCRSSYLANEILWGHRYEPVLFEEKHYYKVDYSRFHKTYEVPNTPLCSARDLAEKKYILSNANSFCYENEVALTSKEEDDSENGVPESTSTDTPPDLDLHNQASVPLEPRPLRRESEI.

At 1-81 (MGSVRTNRYS…IFTTCVDIRW (81 aa)) the chain is on the cytoplasmic side. Position 76 is an S-nitrosocysteine (C76). Residues 82-106 (RWMLVIFCLAFVLSWLFFGCVFWLI) form a helical membrane-spanning segment. At 107–128 (ALLHGDLDASKESKACVSEVNS) the chain is on the extracellular side. Residues 129–140 (FTAAFLFSIETQ) constitute an intramembrane region (helical; Pore-forming). Residues 141–147 (TTIGYGF) constitute an intramembrane region (pore-forming). Positions 142 to 147 (TIGYGF) match the Selectivity filter motif. The Extracellular portion of the chain corresponds to 148–156 (RCVTDECPV). The helical transmembrane segment at 157–178 (AVFMVVFQSIVGCIIDAFIIGA) threads the bilayer. Topologically, residues 179-427 (VMAKMAKPKK…PRPLRRESEI (249 aa)) are cytoplasmic. The tract at residues 181 to 208 (AKMAKPKKRNETLVFSHNAVIAMRDGKL) is polyphosphoinositide (PIP2)-binding. Positions 384–427 (SKEEDDSENGVPESTSTDTPPDLDLHNQASVPLEPRPLRRESEI) are disordered. The short motif at 425 to 427 (SEI) is the PDZ-binding element.

This sequence belongs to the inward rectifier-type potassium channel (TC 1.A.2.1) family. KCNJ2 subfamily. Homotetramer. Homomultimeric and heteromultimeric association with KCNJ4/Kir2.3. Can form heteromeric channels with Kir2.6/KCNJ18. Associates, via its PDZ-recognition domain, with a complex containing LIN7A, LIN7B, LIN7C, DLG1, CASK and APBA1. In terms of processing, S-nitrosylation increases the open probability and inward rectifying currents.

It is found in the cell membrane. Its subcellular location is the sarcolemma. The protein resides in the T-tubule. The enzyme catalyses K(+)(in) = K(+)(out). Its activity is regulated as follows. Activated by phosphatidylinositol 4,5 biphosphate (PtdIns(4,5)P2). Its function is as follows. Inward rectifier potassium channels are characterized by a greater tendency to allow potassium to flow into the cell rather than out of it. Their voltage dependence is regulated by the concentration of extracellular potassium; as external potassium is raised, the voltage range of the channel opening shifts to more positive voltages. The inward rectification is mainly due to the blockage of outward current by internal magnesium. Blocked by external barium or cesium. Probably participates in establishing action potential waveform and excitability of neuronal and muscle tissues. This Canis lupus familiaris (Dog) protein is Inward rectifier potassium channel 2 (KCNJ2).